The chain runs to 620 residues: DNA mismatch repair protein MutL (620 aa).

It belongs to the DNA mismatch repair MutL/HexB family.

Its function is as follows. This protein is involved in the repair of mismatches in DNA. It is required for dam-dependent methyl-directed DNA mismatch repair. May act as a 'molecular matchmaker', a protein that promotes the formation of a stable complex between two or more DNA-binding proteins in an ATP-dependent manner without itself being part of a final effector complex. This chain is DNA mismatch repair protein MutL, found in Clostridium tetani (strain Massachusetts / E88).